The following is a 349-amino-acid chain: AA9 family lytic polysaccharide monooxygenase A (349 aa).

An N-terminal signal peptide occupies residues 1 to 19 (MKSTFGLLALAAAAKLVSA). His-20 and His-102 together coordinate Cu(2+). Cys-62 and Cys-183 are joined by a disulfide. His-169 is a binding site for O2. A Cu(2+)-binding site is contributed by Tyr-180. A disordered region spans residues 233–304 (DGSSSGSSGS…SGSNSGSDSC (72 aa)). Composition is skewed to low complexity over residues 234–262 (GSSS…AVPT) and 269–304 (TSAT…SDSC). The CBM1 domain maps to 311 to 347 (GSVKIYGQCGGQNYSGPTSCEAGLICKEWNPYYHQCV). Asn-323 carries N-linked (GlcNAc...) asparagine glycosylation.

Belongs to the polysaccharide monooxygenase AA9 family. The cofactor is Cu(2+).

The protein resides in the secreted. It carries out the reaction [(1-&gt;4)-beta-D-glucosyl]n+m + reduced acceptor + O2 = 4-dehydro-beta-D-glucosyl-[(1-&gt;4)-beta-D-glucosyl]n-1 + [(1-&gt;4)-beta-D-glucosyl]m + acceptor + H2O.. Functionally, lytic polysaccharide monooxygenase (LPMO) that depolymerizes crystalline and amorphous polysaccharides via the oxidation of scissile alpha- or beta-(1-4)-glycosidic bonds, yielding C4 oxidation products. Catalysis by LPMOs requires the reduction of the active-site copper from Cu(II) to Cu(I) by a reducing agent and H(2)O(2) or O(2) as a cosubstrate. In Aspergillus fumigatus (strain CBS 144.89 / FGSC A1163 / CEA10) (Neosartorya fumigata), this protein is AA9 family lytic polysaccharide monooxygenase A (eglD).